Reading from the N-terminus, the 73-residue chain is Putative membrane protein insertion efficiency factor (73 aa).

It belongs to the UPF0161 family.

Its subcellular location is the cell inner membrane. In terms of biological role, could be involved in insertion of integral membrane proteins into the membrane. The chain is Putative membrane protein insertion efficiency factor from Jannaschia sp. (strain CCS1).